Consider the following 414-residue polypeptide: Putative gustatory receptor 47b (414 aa).

Topologically, residues 1–5 (MQRDD) are cytoplasmic. A helical membrane pass occupies residues 6–26 (GFVYCYGNLYSLLLYWGLVTI). Topologically, residues 27–40 (RVRSPDRGGAFSNR) are extracellular. A helical transmembrane segment spans residues 41–61 (WTVCYALFTRSFMVICFMATV). Over 62 to 142 (MTKLRDPEMS…QWNYRRARLK (81 aa)) the chain is Cytoplasmic. Residues 143–163 (YWYGTVIVGFCFFSFSISLIF) form a helical membrane-spanning segment. At 164 to 182 (DTTRCTCGIPSTLLMAFTY) the chain is on the extracellular side. The chain crosses the membrane as a helical span at residues 183 to 203 (TLLTSSVGLLGFVHIGIMDFI). Over 204–249 (RVRLRLVQQLLHQLYQADDSSEVHERIAYLFEMSKRCSFLLAELNG) the chain is Cytoplasmic. A helical transmembrane segment spans residues 250 to 270 (VFGFAAAAGIFYDFTIMTCFV). At 271-291 (YVICQKLLEREPWDPEYVYML) the chain is on the extracellular side. The chain crosses the membrane as a helical span at residues 292-312 (LHVAIHTYKVVITSTYGYLLL). Over 313–364 (REKRNCMHLLSQYSRYFSGQDVARRKTEDFQHWRMHNRQAAMVGSTTLLSVS) the chain is Cytoplasmic. The chain crosses the membrane as a helical span at residues 365–385 (TIYLVYNGMANYVIILVQLLF). Topologically, residues 386 to 414 (QQQQIKDHQLTSGKDVDIVGPMGPITHMD) are extracellular.

Belongs to the insect chemoreceptor superfamily. Gustatory receptor (GR) family. Gr57a subfamily. Expressed in neurons of the terminal external chemosensory organ of larvae.

The protein resides in the cell membrane. Its function is as follows. Probable gustatory receptor which mediates acceptance or avoidance behavior, depending on its substrates. The polypeptide is Putative gustatory receptor 47b (Gr47b) (Drosophila melanogaster (Fruit fly)).